The following is a 554-amino-acid chain: Arginine--tRNA ligase (554 aa).

A 'HIGH' region motif is present at residues alanine 129 to histidine 139.

Belongs to the class-I aminoacyl-tRNA synthetase family. As to quaternary structure, monomer.

It is found in the cytoplasm. The catalysed reaction is tRNA(Arg) + L-arginine + ATP = L-arginyl-tRNA(Arg) + AMP + diphosphate. The protein is Arginine--tRNA ligase of Syntrophotalea carbinolica (strain DSM 2380 / NBRC 103641 / GraBd1) (Pelobacter carbinolicus).